Consider the following 306-residue polypeptide: 4-diphosphocytidyl-2-C-methyl-D-erythritol kinase (306 aa).

K11 is a catalytic residue. 98 to 108 (PIAGGMGGGSA) is a binding site for ATP. D140 is a catalytic residue.

This sequence belongs to the GHMP kinase family. IspE subfamily.

The enzyme catalyses 4-CDP-2-C-methyl-D-erythritol + ATP = 4-CDP-2-C-methyl-D-erythritol 2-phosphate + ADP + H(+). The protein operates within isoprenoid biosynthesis; isopentenyl diphosphate biosynthesis via DXP pathway; isopentenyl diphosphate from 1-deoxy-D-xylulose 5-phosphate: step 3/6. Functionally, catalyzes the phosphorylation of the position 2 hydroxy group of 4-diphosphocytidyl-2C-methyl-D-erythritol. The sequence is that of 4-diphosphocytidyl-2-C-methyl-D-erythritol kinase from Leifsonia xyli subsp. xyli (strain CTCB07).